A 446-amino-acid chain; its full sequence is tRNA modification GTPase MnmE (446 aa).

(6S)-5-formyl-5,6,7,8-tetrahydrofolate is bound by residues Arg22, Glu80, and Arg119. The TrmE-type G domain maps to 215–370; that stretch reads GFKVAIIGKP…LILALENIMN (156 aa). Asn225 serves as a coordination point for K(+). Residues 225–230, 244–250, and 269–272 each bind GTP; these read NVGKSS, SDIAGTT, and DTAG. Mg(2+) is bound at residue Ser229. K(+)-binding residues include Ser244, Ile246, and Thr249. A Mg(2+)-binding site is contributed by Thr250. Lys446 contacts (6S)-5-formyl-5,6,7,8-tetrahydrofolate.

Belongs to the TRAFAC class TrmE-Era-EngA-EngB-Septin-like GTPase superfamily. TrmE GTPase family. As to quaternary structure, homodimer. Heterotetramer of two MnmE and two MnmG subunits. The cofactor is K(+).

It localises to the cytoplasm. Exhibits a very high intrinsic GTPase hydrolysis rate. Involved in the addition of a carboxymethylaminomethyl (cmnm) group at the wobble position (U34) of certain tRNAs, forming tRNA-cmnm(5)s(2)U34. This Sulfurimonas denitrificans (strain ATCC 33889 / DSM 1251) (Thiomicrospira denitrificans (strain ATCC 33889 / DSM 1251)) protein is tRNA modification GTPase MnmE.